Reading from the N-terminus, the 47-residue chain is Small, acid-soluble spore protein N (47 aa).

A disordered region spans residues Met1–Glu47. Residues Asp33 to Glu47 show a composition bias toward polar residues.

Belongs to the SspN family.

The protein localises to the spore core. This is Small, acid-soluble spore protein N from Geobacillus sp. (strain WCH70).